Reading from the N-terminus, the 960-residue chain is Endoplasmic reticulum aminopeptidase 2 (960 aa).

Over 1 to 20 (MFHSSAMVNSHRKPMFNIHR) the chain is Cytoplasmic. The chain crosses the membrane as a helical; Signal-anchor for type II membrane protein span at residues 21-40 (GFYCLTAILPQICICSQFSV). Topologically, residues 41–960 (PSSYHFTEDP…TLRTWLMVNT (920 aa)) are lumenal. Residues N85 and N119 are each glycosylated (N-linked (GlcNAc...) asparagine). E200 is a substrate binding site. N219 carries an N-linked (GlcNAc...) asparagine glycan. Substrate is bound at residue 334–338 (GAMEN). Zn(2+) is bound at residue H370. E371 serves as the catalytic Proton acceptor. Zn(2+)-binding residues include H374 and E393. Residue N405 is glycosylated (N-linked (GlcNAc...) asparagine). A disulfide bridge connects residues C421 and C460. A glycan (N-linked (GlcNAc...) asparagine) is linked at N650. C759 and C766 are joined by a disulfide.

The protein belongs to the peptidase M1 family. In terms of assembly, heterodimer with ERAP1. It depends on Zn(2+) as a cofactor. Post-translationally, N-glycosylated. Ubiquitously expressed. Highly expressed in spleen and leukocytes.

The protein resides in the endoplasmic reticulum membrane. Its function is as follows. Aminopeptidase that plays a central role in peptide trimming, a step required for the generation of most HLA class I-binding peptides. Peptide trimming is essential to customize longer precursor peptides to fit them to the correct length required for presentation on MHC class I molecules. Preferentially hydrolyzes the basic residues Arg and Lys. This Homo sapiens (Human) protein is Endoplasmic reticulum aminopeptidase 2 (ERAP2).